A 98-amino-acid chain; its full sequence is La1-like protein 13 (98 aa).

A signal peptide spans 1–24 (MERILKPVFLAILIVLSFSSQCMG). Residue Lys97 is modified to Lysine amide.

This sequence belongs to the scorpion La1-like peptide family. Post-translationally, contains 4 disulfide bonds. As to expression, expressed by the venom gland.

Its subcellular location is the secreted. The polypeptide is La1-like protein 13 (Urodacus yaschenkoi (Inland robust scorpion)).